The following is a 348-amino-acid chain: D-erythrose-4-phosphate dehydrogenase (348 aa).

NAD(+)-binding positions include 12–13 (RI) and arginine 81. Substrate-binding positions include 154 to 156 (SCT), arginine 200, 213 to 214 (TK), and arginine 236. Cysteine 155 acts as the Nucleophile in catalysis. Asparagine 318 is a binding site for NAD(+).

It belongs to the glyceraldehyde-3-phosphate dehydrogenase family. Epd subfamily. Homotetramer.

It localises to the cytoplasm. It catalyses the reaction D-erythrose 4-phosphate + NAD(+) + H2O = 4-phospho-D-erythronate + NADH + 2 H(+). The protein operates within cofactor biosynthesis; pyridoxine 5'-phosphate biosynthesis; pyridoxine 5'-phosphate from D-erythrose 4-phosphate: step 1/5. Its function is as follows. Catalyzes the NAD-dependent conversion of D-erythrose 4-phosphate to 4-phosphoerythronate. This Salmonella dublin (strain CT_02021853) protein is D-erythrose-4-phosphate dehydrogenase.